The following is a 305-amino-acid chain: Heat stress transcription factor B-4d (305 aa).

Positions 201-230 (LRRRNSLLLSELAHMRKLYNDIIYFLQNHV) are hydrophobic repeat HR-A/B. Residues 286–289 (KKRR) carry the Nuclear localization signal motif. Residues 286–305 (KKRRVQLVQEDEGDEQGSEG) are disordered. Acidic residues predominate over residues 294–305 (QEDEGDEQGSEG).

Belongs to the HSF family. Class B subfamily. Homotrimer. Post-translationally, exhibits temperature-dependent phosphorylation.

Its subcellular location is the nucleus. Functionally, transcriptional regulator that specifically binds DNA of heat shock promoter elements (HSE). This Oryza sativa subsp. japonica (Rice) protein is Heat stress transcription factor B-4d (HSFB4D).